The following is a 426-amino-acid chain: Serine--tRNA ligase (426 aa).

233–235 (TAE) provides a ligand contact to L-serine. 264-266 (RSE) serves as a coordination point for ATP. Residue Glu287 coordinates L-serine. 351-354 (EISS) provides a ligand contact to ATP. Ser387 lines the L-serine pocket.

This sequence belongs to the class-II aminoacyl-tRNA synthetase family. Type-1 seryl-tRNA synthetase subfamily. As to quaternary structure, homodimer. The tRNA molecule binds across the dimer.

The protein localises to the cytoplasm. The enzyme catalyses tRNA(Ser) + L-serine + ATP = L-seryl-tRNA(Ser) + AMP + diphosphate + H(+). It catalyses the reaction tRNA(Sec) + L-serine + ATP = L-seryl-tRNA(Sec) + AMP + diphosphate + H(+). It functions in the pathway aminoacyl-tRNA biosynthesis; selenocysteinyl-tRNA(Sec) biosynthesis; L-seryl-tRNA(Sec) from L-serine and tRNA(Sec): step 1/1. Its function is as follows. Catalyzes the attachment of serine to tRNA(Ser). Is also able to aminoacylate tRNA(Sec) with serine, to form the misacylated tRNA L-seryl-tRNA(Sec), which will be further converted into selenocysteinyl-tRNA(Sec). In Clostridium botulinum (strain Okra / Type B1), this protein is Serine--tRNA ligase.